Here is a 107-residue protein sequence, read N- to C-terminus: uncharacterized protein (107 aa).

A helical transmembrane segment spans residues 25-42 (LSLCSVLLSWLICAMCLW).

It is found in the host membrane. This is an uncharacterized protein from Galliformes (FAdV-1).